Consider the following 489-residue polypeptide: Betaine aldehyde dehydrogenase (489 aa).

Positions 26 and 93 each coordinate K(+). Position 150–152 (150–152 (GAW)) interacts with NAD(+). Lysine 162 functions as the Charge relay system in the catalytic mechanism. An NAD(+)-binding site is contributed by 176–179 (KPSE). A K(+)-binding site is contributed by valine 180. 229 to 232 (GVET) serves as a coordination point for NAD(+). Leucine 245 provides a ligand contact to K(+). The Proton acceptor role is filled by glutamate 251. Glycine 253, cysteine 285, and glutamate 386 together coordinate NAD(+). Cysteine 285 functions as the Nucleophile in the catalytic mechanism. Cysteine 285 is subject to Cysteine sulfenic acid (-SOH). K(+)-binding residues include lysine 456 and glycine 459. The active-site Charge relay system is glutamate 463.

Belongs to the aldehyde dehydrogenase family. Dimer of dimers. K(+) is required as a cofactor.

It carries out the reaction betaine aldehyde + NAD(+) + H2O = glycine betaine + NADH + 2 H(+). It functions in the pathway amine and polyamine biosynthesis; betaine biosynthesis via choline pathway; betaine from betaine aldehyde: step 1/1. Involved in the biosynthesis of the osmoprotectant glycine betaine. Catalyzes the irreversible oxidation of betaine aldehyde to the corresponding acid. The chain is Betaine aldehyde dehydrogenase from Burkholderia vietnamiensis (strain G4 / LMG 22486) (Burkholderia cepacia (strain R1808)).